Consider the following 334-residue polypeptide: Chemotactic signal transduction system substrate-binding protein CosB (334 aa).

Positions 1-29 are cleaved as a signal peptide; it reads MMDTPEHASTSSRRQLLGMLAAGGTTAVA.

Belongs to the OsmX family.

Its subcellular location is the cell membrane. Functionally, mediates chemotaxis towards compatible osmolytes. May function as a receptor that binds the osmolytes and transduces a signal to CosT. Has probably no additional role in transport. This is Chemotactic signal transduction system substrate-binding protein CosB (cosB) from Halobacterium salinarum (strain ATCC 29341 / DSM 671 / R1).